A 360-amino-acid polypeptide reads, in one-letter code: Mannitol-1-phosphate 5-dehydrogenase (360 aa).

NAD(+) is bound at residue 6–17; it reads ALHFGAGNIGRG.

Belongs to the mannitol dehydrogenase family.

It carries out the reaction D-mannitol 1-phosphate + NAD(+) = beta-D-fructose 6-phosphate + NADH + H(+). The protein is Mannitol-1-phosphate 5-dehydrogenase of Mycoplasmopsis pulmonis (strain UAB CTIP) (Mycoplasma pulmonis).